The primary structure comprises 226 residues: MRIVFDLGGSVVMPKEGAKAEKIMEYANIFKKIKDEGHEVAIVVGGGKTAREYIEIGRELGASESFCDELGIMATRMNAMILITALGDYSIKKVPTSFEEAELILNLGKIPVMGGTHPGHTTDAVAASLAEFINADLLVIGTNVDGVYDKDPNKYEDAKKFDKMSAKELVDLAISSSLKAGSSSVVDLLAAKIIERAKLKVAVVKGTPEELLNVSKGIINGTIIEG.

9–10 provides a ligand contact to ATP; the sequence is GS. Gly46 serves as a coordination point for UMP. The ATP site is built by Gly47 and Arg51. UMP contacts are provided by residues Asp68 and 116–122; that span reads THPGHTT. ATP-binding residues include Thr142, Asn143, Tyr148, and Asp151.

It belongs to the UMP kinase family. As to quaternary structure, homohexamer.

The protein resides in the cytoplasm. The enzyme catalyses UMP + ATP = UDP + ADP. It participates in pyrimidine metabolism; CTP biosynthesis via de novo pathway; UDP from UMP (UMPK route): step 1/1. Its activity is regulated as follows. Inhibited by UTP. Its function is as follows. Catalyzes the reversible phosphorylation of UMP to UDP. This is Uridylate kinase from Methanocaldococcus jannaschii (strain ATCC 43067 / DSM 2661 / JAL-1 / JCM 10045 / NBRC 100440) (Methanococcus jannaschii).